The chain runs to 385 residues: Succinate--CoA ligase [ADP-forming] subunit beta (385 aa).

An ATP-grasp domain is found at 9-240 (KEIFAKYGIP…ETQLPQLEVE (232 aa)). ATP is bound by residues Lys46, 53–55 (GRG), Glu98, Thr101, and Glu106. Residues Asn195 and Asp209 each contribute to the Mg(2+) site. Substrate contacts are provided by residues Asn260 and 317 to 319 (GIL).

This sequence belongs to the succinate/malate CoA ligase beta subunit family. Heterotetramer of two alpha and two beta subunits. Requires Mg(2+) as cofactor.

It catalyses the reaction succinate + ATP + CoA = succinyl-CoA + ADP + phosphate. The catalysed reaction is GTP + succinate + CoA = succinyl-CoA + GDP + phosphate. It participates in carbohydrate metabolism; tricarboxylic acid cycle; succinate from succinyl-CoA (ligase route): step 1/1. Its function is as follows. Succinyl-CoA synthetase functions in the citric acid cycle (TCA), coupling the hydrolysis of succinyl-CoA to the synthesis of either ATP or GTP and thus represents the only step of substrate-level phosphorylation in the TCA. The beta subunit provides nucleotide specificity of the enzyme and binds the substrate succinate, while the binding sites for coenzyme A and phosphate are found in the alpha subunit. This is Succinate--CoA ligase [ADP-forming] subunit beta from Aquifex aeolicus (strain VF5).